Reading from the N-terminus, the 83-residue chain is Small ribosomal subunit protein bS20 (83 aa).

Belongs to the bacterial ribosomal protein bS20 family.

In terms of biological role, binds directly to 16S ribosomal RNA. In Staphylococcus aureus (strain JH1), this protein is Small ribosomal subunit protein bS20.